Consider the following 287-residue polypeptide: Large ribosomal subunit protein uL2 (287 aa).

Residues 221–287 are disordered; it reads RGSVMNPCDH…SKRSRGGRDS (67 aa). Residues 258–287 are compositionally biased toward basic residues; sequence KTRKRNKPSNRFVLRKRRRVSKRSRGGRDS.

Belongs to the universal ribosomal protein uL2 family. As to quaternary structure, part of the 50S ribosomal subunit. Forms a bridge to the 30S subunit in the 70S ribosome.

One of the primary rRNA binding proteins. Required for association of the 30S and 50S subunits to form the 70S ribosome, for tRNA binding and peptide bond formation. It has been suggested to have peptidyltransferase activity; this is somewhat controversial. Makes several contacts with the 16S rRNA in the 70S ribosome. In Prochlorococcus marinus (strain SARG / CCMP1375 / SS120), this protein is Large ribosomal subunit protein uL2.